Here is a 55-residue protein sequence, read N- to C-terminus: Sec-independent protein translocase protein TatA (55 aa).

Residues 1–21 (MFGELGVPEVLFILGIALLIF) form a helical membrane-spanning segment.

This sequence belongs to the TatA/E family. In terms of assembly, forms a complex with TatC.

It localises to the cell inner membrane. In terms of biological role, part of the twin-arginine translocation (Tat) system that transports large folded proteins containing a characteristic twin-arginine motif in their signal peptide across membranes. TatA could form the protein-conducting channel of the Tat system. The chain is Sec-independent protein translocase protein TatA from Koribacter versatilis (strain Ellin345).